We begin with the raw amino-acid sequence, 92 residues long: Small ribosomal subunit protein uS19 (92 aa).

This sequence belongs to the universal ribosomal protein uS19 family.

Functionally, protein S19 forms a complex with S13 that binds strongly to the 16S ribosomal RNA. The polypeptide is Small ribosomal subunit protein uS19 (Nitrobacter winogradskyi (strain ATCC 25391 / DSM 10237 / CIP 104748 / NCIMB 11846 / Nb-255)).